A 249-amino-acid chain; its full sequence is 2,3-bisphosphoglycerate-dependent phosphoglycerate mutase (249 aa).

Substrate-binding positions include 9–16 (RHGQSQWN), 22–23 (TG), Arg61, 88–91 (ERHY), Lys99, 115–116 (RR), and 184–185 (GN). His10 functions as the Tele-phosphohistidine intermediate in the catalytic mechanism. Glu88 (proton donor/acceptor) is an active-site residue.

It belongs to the phosphoglycerate mutase family. BPG-dependent PGAM subfamily. Homodimer.

It catalyses the reaction (2R)-2-phosphoglycerate = (2R)-3-phosphoglycerate. It functions in the pathway carbohydrate degradation; glycolysis; pyruvate from D-glyceraldehyde 3-phosphate: step 3/5. In terms of biological role, catalyzes the interconversion of 2-phosphoglycerate and 3-phosphoglycerate. The polypeptide is 2,3-bisphosphoglycerate-dependent phosphoglycerate mutase (Xylella fastidiosa (strain M23)).